Reading from the N-terminus, the 306-residue chain is Pantothenate kinase (306 aa).

90-97 (GSVAVGKS) provides a ligand contact to ATP.

This sequence belongs to the prokaryotic pantothenate kinase family.

The protein resides in the cytoplasm. It carries out the reaction (R)-pantothenate + ATP = (R)-4'-phosphopantothenate + ADP + H(+). It participates in cofactor biosynthesis; coenzyme A biosynthesis; CoA from (R)-pantothenate: step 1/5. This Listeria monocytogenes serotype 4b (strain CLIP80459) protein is Pantothenate kinase.